The primary structure comprises 356 residues: Na(+)/H(+) exchange regulatory cofactor NHE-RF1 (356 aa).

S2 carries the N-acetylserine modification. S2 and S46 each carry phosphoserine. Residues 14 to 94 (LCCLEKGPNG…AVRLLVVDPE (81 aa)) form the PDZ 1 domain. A disordered region spans residues 113 to 142 (AQEKSEHTEPPAAADTKKAGDQNEAEKSHL). Positions 151–231 (LCTMKKGPNG…EAKLLVVDKE (81 aa)) constitute a PDZ 2 domain. The segment at 265-356 (NSREALVEPA…SKKNELFSNL (92 aa)) is disordered. Phosphoserine is present on residues S266, S277, S287, and S288. Positions 272–288 (EPASESPRPALARSASS) are enriched in low complexity. T290 bears the Phosphothreonine mark. S291 and S299 each carry phosphoserine. The span at 307–317 (EPSSTSSSSDP) shows a compositional bias: low complexity. Over residues 346–356 (WSKKNELFSNL) the composition is skewed to basic and acidic residues.

In terms of assembly, homodimer, and heterodimer with NHERF2. Binds the N-termini of EZR, RDX and MSN. Binds the C-termini of PDGFRA, PDGFRB, ADRB2, NOS2 and CFTR. Binds ARHGAP17, EPI64, RACK1, OPRK1, GNAQ, CTNNB1 and PLCB3. Binds PDZK1. Interacts with CLCN3. Binds the C-terminus of PAG1. In resting T-cells, part of a PAG1-NHERF1-MSN complex which is disrupted upon TCR activation. Forms a complex with CFTR and SLC4A7. Forms a complex with SLC4A7 and ATP6V1B1. Interacts with TRPC4 (via the PDZ-binding domain). Directly interacts with HTR4. Interacts (via the PDZ 1 domain) with PODXL (via the C-terminal PDZ-binding motif DTHL); interaction is not detected in glomerular epithelium cells. Interacts (via the PDZ 1 domain) with PODXL (via the C-terminal PDZ-binding motif DTHL); the interaction take place early in the secretory pathway and is necessary for its apical membrane sorting. Interacts with SLC26A3. Interacts with MCC. Interacts with SLC34A1. Interacts (via the PDZ domains) with SLC26A6 isoform 4 and isoform 5. Interacts (via PDZ domains) with ACE2 (via PDZ-binding motif); the interaction may enhance ACE2 membrane residence.

The protein resides in the cytoplasm. Its subcellular location is the apical cell membrane. It localises to the cell projection. The protein localises to the filopodium. It is found in the ruffle. The protein resides in the microvillus. Its subcellular location is the endomembrane system. Functionally, scaffold protein that connects plasma membrane proteins with members of the ezrin/moesin/radixin family and thereby helps to link them to the actin cytoskeleton and to regulate their surface expression. Necessary for recycling of internalized ADRB2. Was first known to play a role in the regulation of the activity and subcellular location of SLC9A3. Necessary for cAMP-mediated phosphorylation and inhibition of SLC9A3. Involved in sperm capacitation. May participate in the regulation of the chloride and bicarbonate homeostasis in spermatozoa. May enhance Wnt signaling. May participate in HTR4 targeting to microvilli. Involved in the regulation of phosphate reabsorption in the renal proximal tubules. This chain is Na(+)/H(+) exchange regulatory cofactor NHE-RF1 (Nherf1), found in Rattus norvegicus (Rat).